The primary structure comprises 130 residues: Small ribosomal subunit protein eS8 (130 aa).

It belongs to the eukaryotic ribosomal protein eS8 family. In terms of assembly, part of the 30S ribosomal subunit.

The polypeptide is Small ribosomal subunit protein eS8 (Thermococcus gammatolerans (strain DSM 15229 / JCM 11827 / EJ3)).